Reading from the N-terminus, the 319-residue chain is Thioredoxin reductase (319 aa).

Residue 36-43 (TGTNKGGQ) coordinates FAD. Cys-136 and Cys-139 are disulfide-bonded. 288–297 (DVIDHVYRQA) is a binding site for FAD.

This sequence belongs to the class-II pyridine nucleotide-disulfide oxidoreductase family. Homodimer. FAD serves as cofactor.

Its subcellular location is the cytoplasm. It catalyses the reaction [thioredoxin]-dithiol + NADP(+) = [thioredoxin]-disulfide + NADPH + H(+). This is Thioredoxin reductase (trxB) from Buchnera aphidicola subsp. Acyrthosiphon pisum (strain APS) (Acyrthosiphon pisum symbiotic bacterium).